We begin with the raw amino-acid sequence, 562 residues long: Serine/threonine-protein kinase dst3 (562 aa).

The Protein kinase domain maps to 23-285 (FQIVEVVGSG…AQQLLSHPFI (263 aa)). ATP-binding positions include 29–37 (VGSGSFGTV) and lysine 59. Residue aspartate 154 is the Proton acceptor of the active site. Disordered stretches follow at residues 316–339 (LEEQ…TRAS) and 366–562 (SIMR…NVNI). Residues 322-339 (QRNSSGSKMVSSVPTRAS) are compositionally biased toward polar residues. 3 stretches are compositionally biased toward low complexity: residues 421–431 (NNNNNNNNTTT), 442–454 (QQQQ…NNNK), and 476–494 (TTPT…TTKT). Residues 495 to 522 (GSSLNIKPTNNVNRSTISIGQQKSPLQS) show a composition bias toward polar residues. A compositionally biased stretch (acidic residues) spans 542–562 (EDEEDEEEFNHEDYEEINVNI).

Belongs to the protein kinase superfamily. STE Ser/Thr protein kinase family. STE20 subfamily. The cofactor is Mg(2+).

The enzyme catalyses L-seryl-[protein] + ATP = O-phospho-L-seryl-[protein] + ADP + H(+). The catalysed reaction is L-threonyl-[protein] + ATP = O-phospho-L-threonyl-[protein] + ADP + H(+). In Dictyostelium discoideum (Social amoeba), this protein is Serine/threonine-protein kinase dst3.